A 110-amino-acid chain; its full sequence is tRNA-binding protein YgjH (110 aa).

Residues 8-110 (DFARLEMRVG…RMMPAGVRVV (103 aa)) form the tRNA-binding domain.

In terms of assembly, homodimer.

The polypeptide is tRNA-binding protein YgjH (ygjH) (Escherichia coli (strain K12)).